A 272-amino-acid chain; its full sequence is Phosphoribosylformylglycinamidine synthase subunit PurQ (272 aa).

Residues 8–272 (VLVMSGYGIN…FKNAVEYFNK (265 aa)) enclose the Glutamine amidotransferase type-1 domain. C98 serves as the catalytic Nucleophile. Active-site residues include H225, E227, and E235.

In terms of assembly, part of the FGAM synthase complex composed of 1 PurL, 1 PurQ and 2 PurS subunits.

The protein resides in the cytoplasm. It carries out the reaction N(2)-formyl-N(1)-(5-phospho-beta-D-ribosyl)glycinamide + L-glutamine + ATP + H2O = 2-formamido-N(1)-(5-O-phospho-beta-D-ribosyl)acetamidine + L-glutamate + ADP + phosphate + H(+). The enzyme catalyses L-glutamine + H2O = L-glutamate + NH4(+). It participates in purine metabolism; IMP biosynthesis via de novo pathway; 5-amino-1-(5-phospho-D-ribosyl)imidazole from N(2)-formyl-N(1)-(5-phospho-D-ribosyl)glycinamide: step 1/2. Its function is as follows. Part of the phosphoribosylformylglycinamidine synthase complex involved in the purines biosynthetic pathway. Catalyzes the ATP-dependent conversion of formylglycinamide ribonucleotide (FGAR) and glutamine to yield formylglycinamidine ribonucleotide (FGAM) and glutamate. The FGAM synthase complex is composed of three subunits. PurQ produces an ammonia molecule by converting glutamine to glutamate. PurL transfers the ammonia molecule to FGAR to form FGAM in an ATP-dependent manner. PurS interacts with PurQ and PurL and is thought to assist in the transfer of the ammonia molecule from PurQ to PurL. The protein is Phosphoribosylformylglycinamidine synthase subunit PurQ of Methanococcus maripaludis (strain DSM 14266 / JCM 13030 / NBRC 101832 / S2 / LL).